The chain runs to 130 residues: Small ribosomal subunit protein uS8 (130 aa).

Belongs to the universal ribosomal protein uS8 family. As to quaternary structure, part of the 30S ribosomal subunit. Contacts proteins S5 and S12.

Its function is as follows. One of the primary rRNA binding proteins, it binds directly to 16S rRNA central domain where it helps coordinate assembly of the platform of the 30S subunit. The chain is Small ribosomal subunit protein uS8 from Buchnera aphidicola subsp. Schizaphis graminum (strain Sg).